A 483-amino-acid chain; its full sequence is Regulatory protein ViaA (483 aa).

The protein belongs to the ViaA family. Homodimer. Interacts with RavA.

It localises to the cytoplasm. In terms of biological role, component of the RavA-ViaA chaperone complex, which may act on the membrane to optimize the function of some of the respiratory chains. ViaA stimulates the ATPase activity of RavA. The sequence is that of Regulatory protein ViaA from Escherichia coli O17:K52:H18 (strain UMN026 / ExPEC).